Here is a 339-residue protein sequence, read N- to C-terminus: Dicamba O-demethylase, oxygenase component (339 aa).

Residues 8–110 (WYVAALPEEL…VVERDALIWI (103 aa)) form the Rieske domain. Residues cysteine 48, histidine 50, cysteine 67, and histidine 70 each contribute to the [2Fe-2S] cluster site. Residues histidine 159 and histidine 164 each coordinate Fe cation. Residues asparagine 229, histidine 250, and tryptophan 284 each coordinate 3,6-dichloro-2-methoxybenzoate. Aspartate 293 contributes to the Fe cation binding site.

As to quaternary structure, homotrimer. The dicamba O-demethylase multicomponent enzyme system is composed of an oxygenase component (DdmC) and an electron transfer component formed by a ferredoxin reductase (DdmA) and a ferredoxin (DdmB). In vitro, dicamba O-demethylase assays in which DdmA2 is substituted for DdmA1 demonstrate that the two enzymes possess nearly identical activities. The cofactor is [2Fe-2S] cluster.

It carries out the reaction 3,6-dichloro-2-methoxybenzoate + 2 reduced [2Fe-2S]-[ferredoxin] + O2 + 2 H(+) = 3,6-dichlorosalicylate + formaldehyde + 2 oxidized [2Fe-2S]-[ferredoxin] + H2O. With respect to regulation, activity enhanced by Fe(2+) and Mg(2+) ions. Functionally, component of the dicamba O-demethylase multicomponent enzyme system involved in the degradation of the herbicide dicamba. In vitro, catalyzes the O-demethylation of 2-methoxy-3,6-dichlorobenzoic acid (dicamba) to yield 3,6-dichlorosalicylic acid (DCSA) via an exocyclic monooxygenation. This is Dicamba O-demethylase, oxygenase component from Stenotrophomonas maltophilia (Pseudomonas maltophilia).